A 391-amino-acid chain; its full sequence is Thyroid hormone receptor alpha-B (391 aa).

A modulating region spans residues 1 to 32; that stretch reads MAQWPEKEEEEQPMFGEEYTGYIPSYLEKDEP. 2 NR C4-type zinc fingers span residues 33–53 and 71–95; these read CVVCGDKATGYHYRCITCEGC and CKYDCCCIIDKITRNQCQLCRFKKC. Positions 33–100 form a DNA-binding region, nuclear receptor; the sequence is CVVCGDKATG…RFKKCIAVGM (68 aa). Positions 143 to 388 constitute an NR LBD domain; that stretch reads AEWELIRMVT…PPLFLEVFED (246 aa).

The protein belongs to the nuclear hormone receptor family. NR1 subfamily.

Its subcellular location is the nucleus. High affinity receptor for triiodothyronine. In Paralichthys olivaceus (Bastard halibut), this protein is Thyroid hormone receptor alpha-B (thra2).